The chain runs to 183 residues: Ribulose bisphosphate carboxylase small subunit, chloroplastic (183 aa).

A chloroplast-targeting transit peptide spans methionine 1–glutamine 58.

The protein belongs to the RuBisCO small chain family. As to quaternary structure, heterohexadecamer of 8 large and 8 small subunits.

It localises to the plastid. Its subcellular location is the chloroplast. In terms of biological role, ruBisCO catalyzes two reactions: the carboxylation of D-ribulose 1,5-bisphosphate, the primary event in carbon dioxide fixation, as well as the oxidative fragmentation of the pentose substrate. Both reactions occur simultaneously and in competition at the same active site. Although the small subunit is not catalytic it is essential for maximal activity. This Hevea brasiliensis (Para rubber tree) protein is Ribulose bisphosphate carboxylase small subunit, chloroplastic.